Reading from the N-terminus, the 539-residue chain is T-complex protein 1 subunit zeta (539 aa).

It belongs to the TCP-1 chaperonin family. Heterooligomeric complex of about 850 to 900 kDa that forms two stacked rings, 12 to 16 nm in diameter.

It is found in the cytoplasm. Functionally, molecular chaperone; assists the folding of proteins upon ATP hydrolysis. Known to play a role, in vitro, in the folding of actin and tubulin. This Dictyostelium discoideum (Social amoeba) protein is T-complex protein 1 subunit zeta (cct6).